The chain runs to 143 residues: MGKPRGLRTARKHRSHRRDQRWHDKDYKKAHLGTRWKANPFGGASHAKGIVLEKVGVEAKQPNSAIRKCVRVQLIKNGKKITAFVPRDGCLNYIEENDEVLVAGFGRKGHAVGDIPGVRFKVVKVANVSLLALYKEKKERPRS.

The segment covering 1–20 has biased composition (basic residues); the sequence is MGKPRGLRTARKHRSHRRDQ. The segment at 1-26 is disordered; sequence MGKPRGLRTARKHRSHRRDQRWHDKD. Residue proline 62 is modified to Hydroxyproline.

It belongs to the universal ribosomal protein uS12 family. As to quaternary structure, component of the 40S small ribosomal subunit.

The protein localises to the cytoplasm. Its subcellular location is the cytosol. It localises to the rough endoplasmic reticulum. This chain is Small ribosomal subunit protein uS12 (RpS23), found in Dermacentor variabilis (American dog tick).